The sequence spans 197 residues: Imidazoleglycerol-phosphate dehydratase (197 aa).

This sequence belongs to the imidazoleglycerol-phosphate dehydratase family.

The protein localises to the cytoplasm. It catalyses the reaction D-erythro-1-(imidazol-4-yl)glycerol 3-phosphate = 3-(imidazol-4-yl)-2-oxopropyl phosphate + H2O. Its pathway is amino-acid biosynthesis; L-histidine biosynthesis; L-histidine from 5-phospho-alpha-D-ribose 1-diphosphate: step 6/9. This is Imidazoleglycerol-phosphate dehydratase from Novosphingobium aromaticivorans (strain ATCC 700278 / DSM 12444 / CCUG 56034 / CIP 105152 / NBRC 16084 / F199).